The primary structure comprises 128 residues: Sulfurtransferase TusD (128 aa).

Cys78 acts as the Cysteine persulfide intermediate in catalysis.

It belongs to the DsrE/TusD family. Heterohexamer, formed by a dimer of trimers. The hexameric TusBCD complex contains 2 copies each of TusB, TusC and TusD. The TusBCD complex interacts with TusE.

It localises to the cytoplasm. Functionally, part of a sulfur-relay system required for 2-thiolation of 5-methylaminomethyl-2-thiouridine (mnm(5)s(2)U) at tRNA wobble positions. Accepts sulfur from TusA and transfers it in turn to TusE. This chain is Sulfurtransferase TusD, found in Erwinia tasmaniensis (strain DSM 17950 / CFBP 7177 / CIP 109463 / NCPPB 4357 / Et1/99).